A 510-amino-acid chain; its full sequence is Photosystem II CP47 reaction center protein (510 aa).

The Cytoplasmic portion of the chain corresponds to 2–16; the sequence is GLPWYRVHTVLINDP. Residues 17-37 form a helical membrane-spanning segment; that stretch reads GRLIAAHLMHTALVAGWAGSM. Topologically, residues 38 to 94 are lumenal; that stretch reads ALYELATFDPSDPVLNPMWRQGMFVLPFMARLGVTGSWSGWSITGETGIDPGFWSFE. A helical transmembrane segment spans residues 95–116; the sequence is GVALAHIVLSGLLFLAACWHWV. The Cytoplasmic segment spans residues 117–134; it reads YWDLELFRDPRTGEPALD. Residues 135 to 157 form a helical membrane-spanning segment; it reads LPKMFGIHLFLAGLLCFGFGAFH. Over 158–196 the chain is Lumenal; the sequence is LTGLFGPGMWVSDPYGLTGSVQPVAPEWGPDGFNPYNPG. The chain crosses the membrane as a helical span at residues 197-218; that stretch reads GVVAHHIAAGIVGIIAGLFHIL. Topologically, residues 219–233 are cytoplasmic; sequence VRPPQRLYKALRMGN. The helical transmembrane segment at 234–254 threads the bilayer; it reads IETVLSSSIAAVFFAAFVVAG. Residues 255 to 450 lie on the Lumenal side of the membrane; it reads TMWYGSATTP…GIFRTSPRGW (196 aa). A helical transmembrane segment spans residues 451 to 473; sequence FTFAHAVFALLFFFGHIWHGART. Residues 474–510 are Cytoplasmic-facing; sequence LFRDVFSGIDPELSPEQVEWGFYQKVGDVTTRRKEAV.

As to quaternary structure, PSII is composed of 1 copy each of membrane proteins PsbA, PsbB, PsbC, PsbD, PsbE, PsbF, PsbH, PsbI, PsbJ, PsbK, PsbL, PsbM, PsbT, PsbX, PsbY, PsbZ, Psb30/Ycf12, peripheral proteins PsbO, CyanoQ (PsbQ), PsbU, PsbV and a large number of cofactors. It forms dimeric complexes. Part of a photosystem II (PSII) assembly intermediate complex PSII-I; crystallized from a strain deleted of psbJ, it forms monomeric PSII before addition of the oxygen evolving complex. PSII-I includes 3 assembly factors not found in mature PSII (Psb27, Psb28 and Psb34). Requires Binds multiple chlorophylls. PSII binds additional chlorophylls, carotenoids and specific lipids. as cofactor.

Its subcellular location is the cellular thylakoid membrane. Its function is as follows. One of the components of the core complex of photosystem II (PSII). It binds chlorophyll and helps catalyze the primary light-induced photochemical processes of PSII. PSII is a light-driven water:plastoquinone oxidoreductase, using light energy to abstract electrons from H(2)O, generating O(2) and a proton gradient subsequently used for ATP formation. This chain is Photosystem II CP47 reaction center protein, found in Thermosynechococcus vestitus (strain NIES-2133 / IAM M-273 / BP-1).